Reading from the N-terminus, the 212-residue chain is Ribosomal RNA small subunit methyltransferase G (212 aa).

S-adenosyl-L-methionine-binding positions include Gly-80, Leu-85, 131–132, and Arg-146; that span reads AE.

The protein belongs to the methyltransferase superfamily. RNA methyltransferase RsmG family.

The protein localises to the cytoplasm. It carries out the reaction guanosine(527) in 16S rRNA + S-adenosyl-L-methionine = N(7)-methylguanosine(527) in 16S rRNA + S-adenosyl-L-homocysteine. Specifically methylates the N7 position of guanine in position 527 of 16S rRNA. The protein is Ribosomal RNA small subunit methyltransferase G of Xanthomonas campestris pv. campestris (strain B100).